The primary structure comprises 142 residues: Organic hydroperoxide resistance protein-like 2 (142 aa).

The protein belongs to the OsmC/Ohr family.

The chain is Organic hydroperoxide resistance protein-like 2 from Staphylococcus epidermidis (strain ATCC 12228 / FDA PCI 1200).